The primary structure comprises 501 residues: Aerobic glycerol-3-phosphate dehydrogenase (501 aa).

5 to 33 (DLIVIGGGINGAGIAADAAGRGLSVLMLE) contacts FAD.

This sequence belongs to the FAD-dependent glycerol-3-phosphate dehydrogenase family. The cofactor is FAD.

The protein resides in the cytoplasm. It catalyses the reaction a quinone + sn-glycerol 3-phosphate = dihydroxyacetone phosphate + a quinol. It functions in the pathway polyol metabolism; glycerol degradation via glycerol kinase pathway; glycerone phosphate from sn-glycerol 3-phosphate (aerobic route): step 1/1. Functionally, conversion of glycerol 3-phosphate to dihydroxyacetone. Uses molecular oxygen or nitrate as electron acceptor. The polypeptide is Aerobic glycerol-3-phosphate dehydrogenase (glpD) (Escherichia coli (strain K12)).